Consider the following 427-residue polypeptide: Serine--tRNA ligase (427 aa).

231 to 233 (TAE) provides a ligand contact to L-serine. 262–264 (RSE) provides a ligand contact to ATP. An L-serine-binding site is contributed by glutamate 285. 349-352 (EISS) lines the ATP pocket. An L-serine-binding site is contributed by serine 385.

This sequence belongs to the class-II aminoacyl-tRNA synthetase family. Type-1 seryl-tRNA synthetase subfamily. As to quaternary structure, homodimer. The tRNA molecule binds across the dimer.

The protein localises to the cytoplasm. It catalyses the reaction tRNA(Ser) + L-serine + ATP = L-seryl-tRNA(Ser) + AMP + diphosphate + H(+). It carries out the reaction tRNA(Sec) + L-serine + ATP = L-seryl-tRNA(Sec) + AMP + diphosphate + H(+). The protein operates within aminoacyl-tRNA biosynthesis; selenocysteinyl-tRNA(Sec) biosynthesis; L-seryl-tRNA(Sec) from L-serine and tRNA(Sec): step 1/1. In terms of biological role, catalyzes the attachment of serine to tRNA(Ser). Is also able to aminoacylate tRNA(Sec) with serine, to form the misacylated tRNA L-seryl-tRNA(Sec), which will be further converted into selenocysteinyl-tRNA(Sec). The sequence is that of Serine--tRNA ligase from Methylococcus capsulatus (strain ATCC 33009 / NCIMB 11132 / Bath).